Consider the following 229-residue polypeptide: LexA repressor (229 aa).

Residues 26–46 (FDEMKEALDLASKSGIHRLIT) constitute a DNA-binding region (H-T-H motif). Catalysis depends on for autocatalytic cleavage activity residues Ser-149 and Lys-187.

This sequence belongs to the peptidase S24 family. As to quaternary structure, homodimer.

The catalysed reaction is Hydrolysis of Ala-|-Gly bond in repressor LexA.. Its function is as follows. Represses a number of genes involved in the response to DNA damage (SOS response), including recA and lexA. In the presence of single-stranded DNA, RecA interacts with LexA causing an autocatalytic cleavage which disrupts the DNA-binding part of LexA, leading to derepression of the SOS regulon and eventually DNA repair. The chain is LexA repressor from Phenylobacterium zucineum (strain HLK1).